Reading from the N-terminus, the 166-residue chain is Crossover junction endodeoxyribonuclease RuvC (166 aa).

Active-site residues include aspartate 7, glutamate 68, and aspartate 141. The Mg(2+) site is built by aspartate 7, glutamate 68, and aspartate 141.

Belongs to the RuvC family. As to quaternary structure, homodimer which binds Holliday junction (HJ) DNA. The HJ becomes 2-fold symmetrical on binding to RuvC with unstacked arms; it has a different conformation from HJ DNA in complex with RuvA. In the full resolvosome a probable DNA-RuvA(4)-RuvB(12)-RuvC(2) complex forms which resolves the HJ. Requires Mg(2+) as cofactor.

The protein localises to the cytoplasm. It catalyses the reaction Endonucleolytic cleavage at a junction such as a reciprocal single-stranded crossover between two homologous DNA duplexes (Holliday junction).. Its function is as follows. The RuvA-RuvB-RuvC complex processes Holliday junction (HJ) DNA during genetic recombination and DNA repair. Endonuclease that resolves HJ intermediates. Cleaves cruciform DNA by making single-stranded nicks across the HJ at symmetrical positions within the homologous arms, yielding a 5'-phosphate and a 3'-hydroxyl group; requires a central core of homology in the junction. The consensus cleavage sequence is 5'-(A/T)TT(C/G)-3'. Cleavage occurs on the 3'-side of the TT dinucleotide at the point of strand exchange. HJ branch migration catalyzed by RuvA-RuvB allows RuvC to scan DNA until it finds its consensus sequence, where it cleaves and resolves the cruciform DNA. This chain is Crossover junction endodeoxyribonuclease RuvC, found in Koribacter versatilis (strain Ellin345).